Reading from the N-terminus, the 136-residue chain is Protein NrdI (136 aa).

It belongs to the NrdI family.

Probably involved in ribonucleotide reductase function. The chain is Protein NrdI from Salmonella typhi.